Here is a 310-residue protein sequence, read N- to C-terminus: MTTTPNTPLPNSLQKPLERFYEFLRSEKGLSLHTQRNYKQQLETMAQHLAEMGLKDWSQVDAGWVRQLAGKGMREGMKASSLATRLSSLRSFFDFLILRGEMSANPAKGVSAPRKKRPLPKNLDVDEVNQLLEVNEDDPLAIRDRAMMELMYGAGLRLAELVSVDVRDVQLRSGELRVIGKGDKERKVPFSGMATEWVGKWLRVRGDLAAPGEPALFVSKLGTRISHRSVQKRMAEWGQKQSVASHISPHKLRHSFATHMLESSNNLRAVQELLGHENISTTQIYTHLDFQHLAQAYDQAHPRARKKNGE.

The region spanning 11 to 97 is the Core-binding (CB) domain; sequence NSLQKPLERF…SLRSFFDFLI (87 aa). Positions 118–298 constitute a Tyr recombinase domain; sequence PLPKNLDVDE…DFQHLAQAYD (181 aa). Catalysis depends on residues Arg157, Lys181, His250, Arg253, and His276. The active-site O-(3'-phospho-DNA)-tyrosine intermediate is Tyr285.

Belongs to the 'phage' integrase family. XerC subfamily. In terms of assembly, forms a cyclic heterotetrameric complex composed of two molecules of XerC and two molecules of XerD.

It is found in the cytoplasm. Functionally, site-specific tyrosine recombinase, which acts by catalyzing the cutting and rejoining of the recombining DNA molecules. The XerC-XerD complex is essential to convert dimers of the bacterial chromosome into monomers to permit their segregation at cell division. It also contributes to the segregational stability of plasmids. The chain is Tyrosine recombinase XerC from Vibrio parahaemolyticus serotype O3:K6 (strain RIMD 2210633).